The following is a 40-amino-acid chain: Chaperonin HSP60, mitochondrial (40 aa).

Belongs to the chaperonin (HSP60) family.

The protein resides in the mitochondrion. In terms of biological role, implicated in mitochondrial protein import and macromolecular assembly. May facilitate the correct folding of imported proteins. May also prevent misfolding and promote the refolding and proper assembly of unfolded polypeptides generated under stress conditions in the mitochondrial matrix. The sequence is that of Chaperonin HSP60, mitochondrial from Solanum tuberosum (Potato).